Here is an 803-residue protein sequence, read N- to C-terminus: Bromodomain-containing protein 2 (803 aa).

Residue Met1 is modified to N-acetylmethionine. A Phosphothreonine modification is found at Thr6. A Phosphoserine modification is found at Ser37. Residues 53 to 73 form a disordered region; the sequence is ALQLTPANPPPPEVSNPKKPG. In terms of domain architecture, Bromo 1 spans 74–180; the sequence is RVTNQLQYLH…KIFLQKVASM (107 aa). Asp112, Tyr155, Asn156, Lys157, Asp160, and Asp161 together coordinate a protein. Disordered stretches follow at residues 268 to 348, 456 to 652, and 739 to 803; these read PPAQ…KLSE, EPLE…KRQL, and EKRL…SDSG. Over residues 285 to 298 the composition is skewed to low complexity; it reads TTTPTPTAILAPGS. 2 positions are modified to phosphoserine: Ser298 and Ser301. Residues 316–332 show a composition bias toward basic and acidic residues; that stretch reads VRRESGRPIKPPRKDLP. The region spanning 344-453 is the Bromo 2 domain; it reads GKLSEQLKHC…DVFEFRYAKM (110 aa). Residues 481-515 are compositionally biased toward acidic residues; that stretch reads SSEESSSESSSEEEEEEDEDEEEEEEESESSDSEE. Positions 545-567 are enriched in basic residues; sequence KPKRKREKKEKKKKRKAEKHRGR. A Nuclear localization signal motif is present at residues 556-560; sequence KKKRK. Positions 623–632 are enriched in low complexity; it reads KTAPPALPAG. The NET domain occupies 634-716; that stretch reads DSEEEEESRP…SCLRKKPRKP (83 aa). Ser635 carries the post-translational modification Phosphoserine. The span at 641-652 shows a compositional bias: basic and acidic residues; the sequence is SRPMSYDEKRQL. Residues 777–797 show a composition bias toward low complexity; it reads SASSSSSDSSSSSSSSSSSDT.

Belongs to the BET family. As to quaternary structure, homodimer. Interacts with E2F1. Interacts with (acetylated) STAT3; promoting STAT3 recruitment to chromatin. Interacts with CTCF; promoting BRD2 recruitment to chromatin.

It is found in the nucleus. The protein resides in the chromosome. Chromatin reader protein that specifically recognizes and binds histone H4 acetylated at 'Lys-5' and 'Lys-12' (H4K5ac and H4K12ac, respectively), thereby controlling gene expression and remodeling chromatin structures. Recruits transcription factors and coactivators to target gene sites, and activates RNA polymerase II machinery for transcriptional elongation. Plays a key role in genome compartmentalization via its association with CTCF and cohesin: recruited to chromatin by CTCF and promotes formation of topologically associating domains (TADs) via its ability to bind acetylated histones, contributing to CTCF boundary formation and enhancer insulation. Also recognizes and binds acetylated non-histone proteins, such as STAT3. Involved in inflammatory response by regulating differentiation of naive CD4(+) T-cells into T-helper Th17: recognizes and binds STAT3 acetylated at 'Lys-87', promoting STAT3 recruitment to chromatin. In addition to acetylated lysines, also recognizes and binds lysine residues on histones that are both methylated and acetylated on the same side chain to form N6-acetyl-N6-methyllysine (Kacme), an epigenetic mark of active chromatin associated with increased transcriptional initiation. Specifically binds histone H4 acetyl-methylated at 'Lys-5' and 'Lys-12' (H4K5acme and H4K12acme, respectively). The sequence is that of Bromodomain-containing protein 2 (BRD2) from Bos taurus (Bovine).